A 423-amino-acid polypeptide reads, in one-letter code: Glucoside xylosyltransferase 2 (423 aa).

Over 1–6 (MRFRWK) the chain is Cytoplasmic. A helical; Signal-anchor for type II membrane protein transmembrane segment spans residues 7-26 (FFGSLLCVTGLLLVLYRQLG). Residues 27–423 (NVPQPPPGPA…RVVVHIRSDV (397 aa)) are Lumenal-facing. Residues 60–85 (RRDARQGGKKKTNWNNVRAPEQKPNP) are disordered. 2 N-linked (GlcNAc...) asparagine glycosylation sites follow: asparagine 215 and asparagine 256.

It belongs to the glycosyltransferase 8 family.

It is found in the membrane. The enzyme catalyses 3-O-(beta-D-glucosyl)-L-seryl-[EGF-like domain protein] + UDP-alpha-D-xylose = 3-O-[alpha-D-xylosyl-(1-&gt;3)-beta-D-glucosyl]-L-seryl-[EGF-like domain protein] + UDP + H(+). Functionally, glycosyltransferase which elongates the O-linked glucose attached to EGF-like repeats in the extracellular domain of Notch proteins by catalyzing the addition of xylose. This is Glucoside xylosyltransferase 2 (gxylt2) from Xenopus laevis (African clawed frog).